Reading from the N-terminus, the 193-residue chain is MKKYLGVILAALVLTGCPSRPPEPTEPPATIEPVEPQVPTTPTLPPGESVPQPPKIQTLNWEASINPLVAQMLQADGVTPGSILLVDSVKNNTNGSLPIAKATGALYSALSSGKAFTLVPREQLAAAKQTLGLSVDDSLGSRSKAIGLARYVSAQYVLYSDVSGDVKSPQIDMQLMLVQTGEIVWSGNGAVQH.

An N-terminal signal peptide occupies residues 1 to 16 (MKKYLGVILAALVLTG). Cysteine 17 is lipidated: N-palmitoyl cysteine. Cysteine 17 is lipidated: S-diacylglycerol cysteine. Positions 17–55 (CPSRPPEPTEPPATIEPVEPQVPTTPTLPPGESVPQPPK) are disordered. Over residues 28–41 (PATIEPVEPQVPTT) the composition is skewed to low complexity.

This sequence belongs to the LpoB family. In terms of assembly, interacts with PBP1b.

The protein resides in the cell outer membrane. Its function is as follows. Regulator of peptidoglycan synthesis that is essential for the function of penicillin-binding protein 1B (PBP1b). In Pectobacterium carotovorum subsp. carotovorum (strain PC1), this protein is Penicillin-binding protein activator LpoB.